Consider the following 231-residue polypeptide: Putative cobalt transport protein CbiM 2 (231 aa).

The next 6 helical transmembrane spans lie at 8–28 (LPIG…IYGI), 41–61 (VLPL…LKIP), 75–95 (LSAA…VLLF), 108–128 (LGAN…LVFV), 136–156 (VGIG…TYTV), and 176–196 (IAFA…EGII).

Belongs to the CbiM family. In terms of assembly, forms an energy-coupling factor (ECF) transporter complex composed of an ATP-binding protein (A component, CbiO), a transmembrane protein (T component, CbiQ) and 2 possible substrate-capture proteins (S components, CbiM and CbiN) of unknown stoichimetry.

The protein localises to the cell membrane. The protein operates within cofactor biosynthesis; adenosylcobalamin biosynthesis. Part of the energy-coupling factor (ECF) transporter complex CbiMNOQ involved in cobalt import. This Methanocorpusculum labreanum (strain ATCC 43576 / DSM 4855 / Z) protein is Putative cobalt transport protein CbiM 2.